A 435-amino-acid chain; its full sequence is Elongation factor 1-alpha (435 aa).

Residues 4 to 229 (KPHLNLIVIG…DMLEIPPKPV (226 aa)) enclose the tr-type G domain. The segment at 13-20 (GHVDHGKS) is G1. 13-20 (GHVDHGKS) contributes to the GTP binding site. S20 contacts Mg(2+). The segment at 69 to 73 (GVTIN) is G2. The G3 stretch occupies residues 90–93 (DAPG). GTP is bound by residues 90–94 (DAPGH) and 152–155 (TKMD). The tract at residues 152-155 (TKMD) is G4. The interval 193 to 195 (VSI) is G5.

The protein belongs to the TRAFAC class translation factor GTPase superfamily. Classic translation factor GTPase family. EF-Tu/EF-1A subfamily.

Its subcellular location is the cytoplasm. It catalyses the reaction GTP + H2O = GDP + phosphate + H(+). Functionally, GTP hydrolase that promotes the GTP-dependent binding of aminoacyl-tRNA to the A-site of ribosomes during protein biosynthesis. This chain is Elongation factor 1-alpha, found in Metallosphaera sedula (strain ATCC 51363 / DSM 5348 / JCM 9185 / NBRC 15509 / TH2).